The following is a 553-amino-acid chain: Putative transport protein YidE (553 aa).

5 helical membrane-spanning segments follow: residues 4 to 24 (IALTVSILALVAVVGLFIGNV), 28 to 48 (GIGLGIGGVLFGGIIVGHFVS), 65 to 85 (FGLILFVYTIGIQVGPGFFAS), 95 to 115 (LFAVLIVIIGGLVTAILHKLF), and 158 to 178 (MSYAMAYPFGICGILFTMWML). RCK C-terminal domains follow at residues 191–276 (QQHE…VIGQ) and 279–361 (DTSL…VLGN). The next 5 membrane-spanning stretches (helical) occupy residues 371–391 (MLPVFIGIGLGVLLGSIPVFV), 394–414 (FPAALKLGLAGGPLIMALILG), 439–459 (IVLFLSVVGLKSGGDFVNTLV), 464–484 (LSWIGYGALITAVPLITVGIL), and 533–553 (LVMFLRIITPQLLAVLFWSIG).

The protein belongs to the AAE transporter (TC 2.A.81) family. YidE subfamily.

Its subcellular location is the cell membrane. The sequence is that of Putative transport protein YidE from Shigella dysenteriae serotype 1 (strain Sd197).